A 733-amino-acid polypeptide reads, in one-letter code: MTFPEADILLKSGECAGQTMLDTMEAPGHSRQLLLQLNNQRTKGFLCDVIIVVQNALFRAHKNVLAASSAYLKSLVVHDNLLNLDHDMVSPAVFRLVLDFIYTGRLADGAEAAAAAAVAPGAEPSLGAVLAAASYLQIPDLVALCKKRLKRHGKYCHLRGGGGGGGGYAPYGRPGRGLRAATPVIQACYPSPVGPPPPPAAEPPSGPEAAVNTHCAELYASGPGPAAALCASERRCSPLCGLDLSKKSPPGSAAPERPLAERELPPRPDSPPSAGPAAYKEPPLALPSLPPLPFQKLEEAAPPSDPFRGGSGSPGPEPPGRPDGPSLLYRWMKHEPGLGSYGDELGRERGSPSERCEERGGDAAVSPGGPPLGLAPPPRYPGSLDGPGAGGDGDDYKSSSEETGSSEDPSPPGGHLEGYPCPHLAYGEPESFGDNLYVCIPCGKGFPSSEQLNAHVEAHVEEEEALYGRAEAAEVAAGAAGLGPPFGGGGDKVAGAPGGLGELLRPYRCASCDKSYKDPATLRQHEKTHWLTRPYPCTICGKKFTQRGTMTRHMRSHLGLKPFACDACGMRFTRQYRLTEHMRIHSGEKPYECQVCGGKFAQQRNLISHMKMHAVGGAAGAAGALAGLGGLPGVPGPDGKGKLDFPEGVFAVARLTAEQLSLKQQDKAAAAELLAQTTHFLHDPKVALESLYPLAKFTAELGLSPDKAAEVLSQGAHLAAGPDGRTIDRFSPT.

Residues 47–110 (CDVIIVVQNA…IYTGRLADGA (64 aa)) enclose the BTB domain. The segment at 154-315 (KYCHLRGGGG…PFRGGSGSPG (162 aa)) is mediates HDAC-dependent transcriptional repression. Arg159 is modified (omega-N-methylarginine). The tract at residues 189–209 (YPSPVGPPPPPAAEPPSGPEA) is disordered. Residues 192–206 (PVGPPPPPAAEPPSG) show a composition bias toward pro residues. Ser237 is subject to Phosphoserine. An interaction with CTBP1 region spans residues 241–247 (GLDLSKK). A disordered region spans residues 241–421 (GLDLSKKSPP…PGGHLEGYPC (181 aa)). Residue Ser248 is modified to Phosphoserine. A compositionally biased stretch (pro residues) spans 284–293 (LALPSLPPLP). At Lys333 the chain carries N6-acetyllysine; alternate. A Glycyl lysine isopeptide (Lys-Gly) (interchain with G-Cter in SUMO); alternate cross-link involves residue Lys333. The span at 344 to 361 (ELGRERGSPSERCEERGG) shows a compositional bias: basic and acidic residues. A Phosphoserine modification is found at Ser366. Residues 368-380 (GGPPLGLAPPPRY) are compositionally biased toward pro residues. 5 consecutive C2H2-type zinc fingers follow at residues 439 to 459 (CIPC…VEAH), 509 to 529 (CASC…EKTH), 537 to 557 (CTIC…MRSH), 565 to 585 (CDAC…MRIH), and 593 to 613 (CQVC…MKMH). Residue Ser704 is modified to Phosphoserine.

The protein belongs to the krueppel C2H2-type zinc-finger protein family. Hic subfamily. In terms of assembly, self-associates. Interacts with HIC2. Interacts with CTBP1 and CTBP2. Interacts with TCF7L2 and ARID1A. Interacts with MTA1 and MBD3; indicative for an association with the NuRD complex. Interacts with SIRT1. In terms of processing, acetylated on several residues, including Lys-333. Lys-333 is deacetylated by SIRT1. Post-translationally, sumoylated on Lys-333 by a PIAS family member, which enhances interaction with MTA1, positively regulates transcriptional repression activity and is enhanced by HDAC4. Ubiquitously expressed with highest levels found in lung, colon, prostate, thymus, testis and ovary. Expression is absent or decreased in many tumor cells.

Its subcellular location is the nucleus. Its function is as follows. Transcriptional repressor. Recognizes and binds to the consensus sequence '5-[CG]NG[CG]GGGCA[CA]CC-3'. May act as a tumor suppressor. Involved in development of head, face, limbs and ventral body wall. Involved in down-regulation of SIRT1 and thereby is involved in regulation of p53/TP53-dependent apoptotic DNA-damage responses. The specific target gene promoter association seems to be depend on corepressors, such as CTBP1 or CTBP2 and MTA1. In cooperation with MTA1 (indicative for an association with the NuRD complex) represses transcription from CCND1/cyclin-D1 and CDKN1C/p57Kip2 specifically in quiescent cells. Involved in regulation of the Wnt signaling pathway probably by association with TCF7L2 and preventing TCF7L2 and CTNNB1 association with promoters of TCF-responsive genes. Seems to repress transcription from E2F1 and ATOH1 which involves ARID1A, indicative for the participation of a distinct SWI/SNF-type chromatin-remodeling complex. Probably represses transcription of ACKR3, FGFBP1 and EFNA1. The sequence is that of Hypermethylated in cancer 1 protein (HIC1) from Homo sapiens (Human).